A 520-amino-acid polypeptide reads, in one-letter code: MLNVPSQSFPGPSSQQRVASGGRSKVPLKQGRSLMDWIRLTKSGKDLTGLKGRLIEVTEEELKKHNKKDDCWICIRGFVYNVSPYMEYHPGGEDELMRAAGSDGTDLFDQVHRWVNYESMLKECLVGRMAMKPALPKDYHEEKKVLNGMLPQSQVTDTLAKEGPSSPSYDWFQTDSLVTIVIYTKQKDINLDSVIVDHRDDSFRAETVIKDYSYLVHVALSHEIQEDFSVLVVENVGKIEIVLKKKENTSWKCLGHPQENHNSFIPKKDTGLFYRKCQLVSKEDVTHDTKLFCLMLPPSTHLEVPVGQHVYLRLPITGTEIVKPYTPVCDSLFSEFKEPVLPNNIYIYFLIKIYPAGFFTPELDQLQIGDYVSVSNPEGNFIISQLQELEDLFLLAAGTGFTPMVKVLNYALTNIPSLRKVKLMFFNKTEDDIIWRSQLEKLAFKDKRFEVEFVLSAPTSEWSGKQGYISPALLSEFLKRRSDTSKVLICLCGPTPFTEQGMKMLHDLNFSKDEIHSFTA.

Residue Met1 is modified to N-acetylmethionine. A compositionally biased stretch (low complexity) spans 1–16 (MLNVPSQSFPGPSSQQ). The disordered stretch occupies residues 1–27 (MLNVPSQSFPGPSSQQRVASGGRSKVP). One can recognise a Cytochrome b5 heme-binding domain in the interval 54–130 (LIEVTEEELK…LKECLVGRMA (77 aa)). Heme-binding residues include His89 and His112. Residues 164–255 (PSSPSYDWFQ…KENTSWKCLG (92 aa)) form the CS domain. The FAD-binding FR-type domain maps to 272 to 384 (LFYRKCQLVS…SNPEGNFIIS (113 aa)). FAD is bound by residues 364 to 379 (DQLQ…NPEG) and 391 to 423 (DLFL…KVKL).

The protein belongs to the flavoprotein pyridine nucleotide cytochrome reductase family. FAD is required as a cofactor.

Its subcellular location is the endoplasmic reticulum. The enzyme catalyses 2 Fe(III)-[cytochrome b5] + NADH = 2 Fe(II)-[cytochrome b5] + NAD(+) + H(+). Functionally, NADH-cytochrome b5 reductase involved in endoplasmic reticulum stress response pathway. Plays a critical role in protecting pancreatic beta-cells against oxidant stress, possibly by protecting the cell from excess buildup of reactive oxygen species (ROS). The chain is Cytochrome b5 reductase 4 (CYB5R4) from Bos taurus (Bovine).